We begin with the raw amino-acid sequence, 508 residues long: 25-hydroxyvitamin D-1 alpha hydroxylase, mitochondrial (508 aa).

C455 serves as a coordination point for heme.

This sequence belongs to the cytochrome P450 family. Heme serves as cofactor. In terms of tissue distribution, kidney.

It is found in the mitochondrion membrane. The enzyme catalyses calcidiol + 2 reduced [adrenodoxin] + O2 + 2 H(+) = calcitriol + 2 oxidized [adrenodoxin] + H2O. It catalyses the reaction secalciferol + 2 reduced [adrenodoxin] + O2 + 2 H(+) = calcitetrol + 2 oxidized [adrenodoxin] + H2O. The catalysed reaction is 25-hydroxy-24-oxocalciol + 2 reduced [adrenodoxin] + O2 + 2 H(+) = (1S)-1,25-dihydroxy-24-oxocalciol + 2 oxidized [adrenodoxin] + H2O. It carries out the reaction 25-hydroxyvitamin D2 + 2 reduced [adrenodoxin] + O2 + 2 H(+) = 1alpha,25-dihydroxyvitamin D2 + 2 oxidized [adrenodoxin] + H2O. It functions in the pathway hormone biosynthesis; vitamin D biosynthesis. Activated by cardiolipin and dioleoyl phosphatidylethanolamine (DOPE), phospholipids found in the inner mitochondrial membrane. Inhibited by high substrate concentration. Functionally, a cytochrome P450 monooxygenase involved in vitamin D metabolism and in calcium and phosphorus homeostasis. Catalyzes the rate-limiting step in the activation of vitamin D in the kidney, namely the hydroxylation of 25-hydroxyvitamin D3/calcidiol at the C1alpha-position to form the hormonally active form of vitamin D3, 1alpha,25-dihydroxyvitamin D3/calcitriol that acts via the vitamin D receptor (VDR). Has 1alpha-hydroxylase activity on vitamin D intermediates of the CYP24A1-mediated inactivation pathway. Converts 24R,25-dihydroxyvitamin D3/secalciferol to 1-alpha,24,25-trihydroxyvitamin D3, an active ligand of VDR. Also active on 25-hydroxyvitamin D2. Mechanistically, uses molecular oxygen inserting one oxygen atom into a substrate, and reducing the second into a water molecule, with two electrons provided by NADPH via FDXR/adrenodoxin reductase and FDX1/adrenodoxin. This chain is 25-hydroxyvitamin D-1 alpha hydroxylase, mitochondrial (CYP27B1), found in Homo sapiens (Human).